The primary structure comprises 58 residues: Small ribosomal subunit protein bS21 (58 aa).

The interval 39–58 is disordered; the sequence is EKPSVKRKRKSEVARKRKKF. Residues 43-58 show a composition bias toward basic residues; that stretch reads VKRKRKSEVARKRKKF.

Belongs to the bacterial ribosomal protein bS21 family.

This Streptococcus pneumoniae (strain ATCC BAA-255 / R6) protein is Small ribosomal subunit protein bS21.